We begin with the raw amino-acid sequence, 682 residues long: Potassium-transporting ATPase ATP-binding subunit (682 aa).

Transmembrane regions (helical) follow at residues 34 to 54 (PVMF…IAMA), 62 to 82 (ALFS…ANFA), 219 to 239 (IALT…TATL), and 254 to 274 (VLVA…LSAI). The 4-aspartylphosphate intermediate role is filled by aspartate 307. ATP-binding positions include aspartate 344, glutamate 348, 377-384 (FTAQSRMS), and lysine 395. 2 residues coordinate Mg(2+): aspartate 518 and aspartate 522. 3 helical membrane-spanning segments follow: residues 588-608 (FAII…LNIM), 616-636 (AILS…PLAL), and 656-676 (IYGL…DLLL).

The protein belongs to the cation transport ATPase (P-type) (TC 3.A.3) family. Type IA subfamily. The system is composed of three essential subunits: KdpA, KdpB and KdpC.

The protein resides in the cell inner membrane. The enzyme catalyses K(+)(out) + ATP + H2O = K(+)(in) + ADP + phosphate + H(+). Its function is as follows. Part of the high-affinity ATP-driven potassium transport (or Kdp) system, which catalyzes the hydrolysis of ATP coupled with the electrogenic transport of potassium into the cytoplasm. This subunit is responsible for energy coupling to the transport system and for the release of the potassium ions to the cytoplasm. In Escherichia fergusonii (strain ATCC 35469 / DSM 13698 / CCUG 18766 / IAM 14443 / JCM 21226 / LMG 7866 / NBRC 102419 / NCTC 12128 / CDC 0568-73), this protein is Potassium-transporting ATPase ATP-binding subunit.